We begin with the raw amino-acid sequence, 165 residues long: Putative universal stress protein SH1215 (165 aa).

This sequence belongs to the universal stress protein A family.

The protein localises to the cytoplasm. The sequence is that of Putative universal stress protein SH1215 from Staphylococcus haemolyticus (strain JCSC1435).